A 491-amino-acid polypeptide reads, in one-letter code: Ketol-acid reductoisomerase (NADP(+)) (491 aa).

One can recognise a KARI N-terminal Rossmann domain in the interval 15-208 (AQLGKCRFMA…GGHRAGVLES (194 aa)). Residues 45-48 (CGAQ), R68, R76, S78, and 108-110 (DKQ) each bind NADP(+). Residue H132 is part of the active site. Residue G158 participates in NADP(+) binding. 2 KARI C-terminal knotted domains span residues 209–344 (SFVA…TAPQ) and 345–484 (YEGK…MTDM). The Mg(2+) site is built by D217, E221, E389, and E393. S414 contributes to the substrate binding site.

Belongs to the ketol-acid reductoisomerase family. Mg(2+) serves as cofactor.

The catalysed reaction is (2R)-2,3-dihydroxy-3-methylbutanoate + NADP(+) = (2S)-2-acetolactate + NADPH + H(+). It carries out the reaction (2R,3R)-2,3-dihydroxy-3-methylpentanoate + NADP(+) = (S)-2-ethyl-2-hydroxy-3-oxobutanoate + NADPH + H(+). It functions in the pathway amino-acid biosynthesis; L-isoleucine biosynthesis; L-isoleucine from 2-oxobutanoate: step 2/4. The protein operates within amino-acid biosynthesis; L-valine biosynthesis; L-valine from pyruvate: step 2/4. Functionally, involved in the biosynthesis of branched-chain amino acids (BCAA). Catalyzes an alkyl-migration followed by a ketol-acid reduction of (S)-2-acetolactate (S2AL) to yield (R)-2,3-dihydroxy-isovalerate. In the isomerase reaction, S2AL is rearranged via a Mg-dependent methyl migration to produce 3-hydroxy-3-methyl-2-ketobutyrate (HMKB). In the reductase reaction, this 2-ketoacid undergoes a metal-dependent reduction by NADPH to yield (R)-2,3-dihydroxy-isovalerate. The polypeptide is Ketol-acid reductoisomerase (NADP(+)) (Klebsiella pneumoniae subsp. pneumoniae (strain ATCC 700721 / MGH 78578)).